The chain runs to 425 residues: Enolase (425 aa).

Residue Gln163 participates in (2R)-2-phosphoglycerate binding. Glu205 functions as the Proton donor in the catalytic mechanism. Asp242, Glu285, and Asp312 together coordinate Mg(2+). Residues Lys337, Arg366, Ser367, and Lys388 each coordinate (2R)-2-phosphoglycerate. Lys337 (proton acceptor) is an active-site residue.

Belongs to the enolase family. The cofactor is Mg(2+).

Its subcellular location is the cytoplasm. It is found in the secreted. The protein resides in the cell surface. The catalysed reaction is (2R)-2-phosphoglycerate = phosphoenolpyruvate + H2O. Its pathway is carbohydrate degradation; glycolysis; pyruvate from D-glyceraldehyde 3-phosphate: step 4/5. Functionally, catalyzes the reversible conversion of 2-phosphoglycerate (2-PG) into phosphoenolpyruvate (PEP). It is essential for the degradation of carbohydrates via glycolysis. The polypeptide is Enolase (Cereibacter sphaeroides (strain ATCC 17025 / ATH 2.4.3) (Rhodobacter sphaeroides)).